A 248-amino-acid chain; its full sequence is Protein G1-like6 (248 aa).

The segment covering 1–15 (MDRHHHHHHHHHHHM) has biased composition (basic residues). Disordered regions lie at residues 1–35 (MDRHHHHHHHHHHHMMSGGGQDPAAGDGGAGGATQ), 50–84 (GAGSSSSGAGTSAGGGGGGPSPSSSSPSLSRYESQ), and 198–248 (ARGI…FIIP). A compositionally biased stretch (gly residues) spans 17-32 (SGGGQDPAAGDGGAGG). Residues 50 to 59 (GAGSSSSGAG) show a composition bias toward low complexity. Residues 60–69 (TSAGGGGGGP) are compositionally biased toward gly residues. Low complexity predominate over residues 70–79 (SPSSSSPSLS). The ALOG domain occupies 80-207 (RYESQKRRDW…ARGISYEKKK (128 aa)). The short motif at 205 to 209 (KKKRK) is the Nuclear localization signal element. Low complexity-rich tracts occupy residues 212 to 224 (SSAGAGAGPSSEG) and 239 to 248 (TSASPQFIIP).

It belongs to the plant homeotic and developmental regulators ALOG protein family.

The protein resides in the nucleus. Probable transcription regulator that acts as a developmental regulator by promoting cell growth in response to light. The protein is Protein G1-like6 of Oryza sativa subsp. indica (Rice).